Reading from the N-terminus, the 439-residue chain is GTPase Obg (439 aa).

In terms of domain architecture, Obg spans 1 to 159; it reads MAFVDQAQIE…RNLKLELKVL (159 aa). Positions 160 to 336 constitute an OBG-type G domain; that stretch reads ADVGLVGFPS…LMRLTADMLA (177 aa). GTP-binding positions include 166 to 173, 191 to 195, 213 to 216, 283 to 286, and 317 to 319; these read GFPSAGKS, FTTLS, DLPG, TKMD, and SSI. Residues S173 and T193 each coordinate Mg(2+). The segment at 338-357 is disordered; the sequence is APAPESYRPETKNDTSEKSY. The span at 344 to 354 shows a compositional bias: basic and acidic residues; it reads YRPETKNDTSE. Residues 358–439 form the OCT domain; that stretch reads TFKPETHDFT…NSDFVFEFSE (82 aa).

This sequence belongs to the TRAFAC class OBG-HflX-like GTPase superfamily. OBG GTPase family. In terms of assembly, monomer. Mg(2+) serves as cofactor.

Its subcellular location is the cytoplasm. Functionally, an essential GTPase which binds GTP, GDP and possibly (p)ppGpp with moderate affinity, with high nucleotide exchange rates and a fairly low GTP hydrolysis rate. Plays a role in control of the cell cycle, stress response, ribosome biogenesis and in those bacteria that undergo differentiation, in morphogenesis control. The chain is GTPase Obg from Leuconostoc mesenteroides subsp. mesenteroides (strain ATCC 8293 / DSM 20343 / BCRC 11652 / CCM 1803 / JCM 6124 / NCDO 523 / NBRC 100496 / NCIMB 8023 / NCTC 12954 / NRRL B-1118 / 37Y).